Reading from the N-terminus, the 497-residue chain is MELVVKSVAAASVKTATLVLPVGENRKLGTVAQAVDQACEGAISAVLKRGDLAGKPGQTLLLQNLSGLKAERVLLVGSGKEEALGDRAWRKLVASVAGVLKGLNGADAVLALDDIAVSNRDAHYGKYRLLAETLLDGEYVFDRFKSQKAEPRALKKVTLLADKAGQAEVERAVKHASAIASGMAFTRDLGNLPPNLCHPSYLAEQAKELGKAHKALKVEVLDEKKIKDLGMGAFYAVGQGSDQPPRLIVLNYQGGKKADKPFVLVGKGITFDTGGISLKPGAGMDEMKYDMCGAASVFGTLRAVLELQLPINLVCLLACAENMPSGGATRPGDIVTTMSGQTVEILNTDAEGRLVLCDTLTYAERFKPQAVIDIATLTGACIVALGSHTSGLMGNNDDLVGQLLDAGKRADDRAWQLPLFEEYQEQLDSPFADMGNIGGPKAGTITAGCFLSRFAKAYNWAHMDIAGTAWVSGGKDKGATGRPVPLLTQYLLDRAGA.

Positions 267 and 272 each coordinate Mn(2+). Lysine 279 is an active-site residue. Mn(2+)-binding residues include aspartate 290, aspartate 349, and glutamate 351. Arginine 353 is an active-site residue.

Belongs to the peptidase M17 family. Mn(2+) is required as a cofactor.

Its subcellular location is the cytoplasm. It catalyses the reaction Release of an N-terminal amino acid, Xaa-|-Yaa-, in which Xaa is preferably Leu, but may be other amino acids including Pro although not Arg or Lys, and Yaa may be Pro. Amino acid amides and methyl esters are also readily hydrolyzed, but rates on arylamides are exceedingly low.. The enzyme catalyses Release of an N-terminal amino acid, preferentially leucine, but not glutamic or aspartic acids.. In terms of biological role, presumably involved in the processing and regular turnover of intracellular proteins. Catalyzes the removal of unsubstituted N-terminal amino acids from various peptides. This Pseudomonas putida (strain ATCC 47054 / DSM 6125 / CFBP 8728 / NCIMB 11950 / KT2440) protein is Probable cytosol aminopeptidase.